The sequence spans 192 residues: Probable thymidylate kinase (192 aa).

8 to 15 (GIDGSGKS) contacts ATP.

It belongs to the thymidylate kinase family.

The enzyme catalyses dTMP + ATP = dTDP + ADP. The sequence is that of Probable thymidylate kinase from Pyrobaculum aerophilum (strain ATCC 51768 / DSM 7523 / JCM 9630 / CIP 104966 / NBRC 100827 / IM2).